Here is a 286-residue protein sequence, read N- to C-terminus: Isopentenyl-diphosphate Delta-isomerase II (286 aa).

One can recognise a Nudix hydrolase domain in the interval 104–256 (MLHRAFSVFL…GLKLSPWFRL (153 aa)). Active-site residues include Cys141 and Glu203.

It belongs to the IPP isomerase type 1 family.

The catalysed reaction is isopentenyl diphosphate = dimethylallyl diphosphate. The protein operates within isoprenoid biosynthesis; dimethylallyl diphosphate biosynthesis; dimethylallyl diphosphate from isopentenyl diphosphate: step 1/1. Its pathway is porphyrin-containing compound metabolism; chlorophyll biosynthesis. Its function is as follows. Catalyzes the 1,3-allylic rearrangement of the homoallylic substrate isopentenyl (IPP) to its highly electrophilic allylic isomer, dimethylallyl diphosphate (DMAPP). This is Isopentenyl-diphosphate Delta-isomerase II (IPI2) from Clarkia breweri (Fairy fans).